Consider the following 2595-residue polypeptide: Glucosylceramide transporter ABCA12 (2595 aa).

Residues 23-43 (PLWTLVLILWPVIIFIILAIT) traverse the membrane as a helical segment. The span at 109 to 119 (LKKPSNPKRDS) shows a compositional bias: basic and acidic residues. A disordered region spans residues 109–143 (LKKPSNPKRDSNLSLRSTQVPERSHTSLATVPPRP). Residues Asn-120, Asn-156, Asn-174, Asn-214, Asn-275, Asn-331, Asn-365, Asn-381, Asn-410, Asn-433, Asn-455, Asn-526, Asn-541, Asn-574, Asn-605, Asn-645, Asn-749, Asn-773, Asn-812, Asn-823, Asn-854, Asn-917, and Asn-960 are each glycosylated (N-linked (GlcNAc...) asparagine). Positions 120 to 137 (NLSLRSTQVPERSHTSLA) are enriched in polar residues. The next 3 membrane-spanning stretches (helical) occupy residues 1062–1082 (VSYS…AAFV), 1109–1129 (FAWL…LIVI), and 1142–1162 (FILF…SYLI). Asn-1167 is a glycosylation site (N-linked (GlcNAc...) asparagine). 3 helical membrane passes run 1171-1191 (IAAL…IVLV), 1197-1217 (LSYV…SYAS), and 1247-1267 (FGWL…IAWY). An N-linked (GlcNAc...) asparagine glycan is attached at Asn-1319. Residues 1346–1577 (VALHGVTKIY…FGDGYHLTLT (232 aa)) enclose the ABC transporter 1 domain. An ATP-binding site is contributed by 1378 to 1385 (GPNGAGKT). N-linked (GlcNAc...) asparagine glycosylation is found at Asn-1524, Asn-1663, Asn-1673, Asn-1686, Asn-1690, and Asn-1704. Positions 1672-1703 (SNMSLEHLTQRKVGNPSANGTSTPDDLSVSSS) are disordered. The segment covering 1687-1703 (PSANGTSTPDDLSVSSS) has biased composition (polar residues). Residues 1747-1767 (LIAQVILPIVFVATAMGLGTL) traverse the membrane as a helical segment. N-linked (GlcNAc...) asparagine glycans are attached at residues Asn-1819, Asn-1835, Asn-1876, Asn-1921, and Asn-1952. Helical transmembrane passes span 1979 to 1999 (ATIS…GYSV), 2035 to 2055 (FIYD…VIAI), 2072 to 2092 (LLLL…AGLF), 2103 to 2123 (VCVN…VYFL), 2143 to 2163 (IFLI…SQQQ), 2187 to 2207 (GAMF…RLLI), and 2270 to 2290 (IIAV…GLLG). Residues 2254 to 2489 (VQLHRLTKTY…FGRGFTVKVH (236 aa)) enclose the ABC transporter 2 domain. 2290–2297 (GVNGAGKT) is an ATP binding site. N-linked (GlcNAc...) asparagine glycans are attached at residues Asn-2318, Asn-2542, and Asn-2547. Over residues 2575-2587 (VDTSSQGSTISVD) the composition is skewed to polar residues. A disordered region spans residues 2575-2595 (VDTSSQGSTISVDSQEDQLDS).

This sequence belongs to the ABC transporter superfamily. ABCA family. Interacts with NR1H2 and ABCA1; this interaction is required for ABCA1 localization to the cell surface and is necessary for its normal activity and stability. Expressed in a number of other tissues besides skin, including heart, intestine, stomach, and kidney. Expressed mainly in the granular layer of the skin. Expressed in lung. Expressed in alpha and beta cells of pancreatic islets.

It localises to the cytoplasmic vesicle. Its subcellular location is the secretory vesicle membrane. The protein resides in the golgi apparatus membrane. The catalysed reaction is ATP + H2O + phospholipidSide 1 = ADP + phosphate + phospholipidSide 2.. The enzyme catalyses a beta-D-glucosylceramide(in) + ATP + H2O = a beta-D-glucosylceramide(out) + ADP + phosphate + H(+). Its function is as follows. Transports lipids such as glucosylceramides from the outer to the inner leaflet of lamellar granules (LGs) membrane, whereby the lipids are finally transported to the keratinocyte periphery via the trans-Golgi network and LGs and released to the apical surface of the granular keratinocytes to form lipid lamellae in the stratum corneum of the epidermis, which is essential for skin barrier function. In the meantime, participates in the transport of the lamellar granules-associated proteolytic enzymes, in turn regulates desquamation and keratinocyte differentiation. Furthermore, is essential for the regulation of cellular cholesterol homeostasis by regulating ABCA1-dependent cholesterol efflux from macrophages through interaction with NR1H2 and ABCA1. Plays pleiotropic roles in regulating glucose stimulated insulin secretion from beta cells, regulating the morphology and fusion of insulin granules, lipid raft abundance and the actin cytoskeleton. Also involved in lung surfactant biogenesis. This Mus musculus (Mouse) protein is Glucosylceramide transporter ABCA12.